The primary structure comprises 633 residues: Chaperone protein DnaK (633 aa).

Phosphothreonine; by autocatalysis is present on Thr198. A disordered region spans residues 599 to 633 (QQASQETPGDGDAGAAGAKKKDDDDVVDADYEEVK). The span at 622–633 (DDVVDADYEEVK) shows a compositional bias: acidic residues.

Belongs to the heat shock protein 70 family.

Its function is as follows. Acts as a chaperone. The sequence is that of Chaperone protein DnaK from Desulfotalea psychrophila (strain LSv54 / DSM 12343).